The primary structure comprises 148 residues: Hemoglobin subunit alpha (148 aa).

S1 bears the N-acetylserine mark. The Globin domain maps to 8 to 148; that stretch reads DYSAADRAEL…VCHELSSRYR (141 aa). H66 contributes to the O2 binding site. H95 provides a ligand contact to heme b.

Belongs to the globin family. As to quaternary structure, heterotetramer of two alpha chains and two beta chains. As to expression, red blood cells.

Functionally, involved in oxygen transport from the lung to the various peripheral tissues. The chain is Hemoglobin subunit alpha (HBA) from Heterodontus portusjacksoni (Port Jackson shark).